The sequence spans 383 residues: tRNA-specific 2-thiouridylase MnmA (383 aa).

ATP is bound by residues 9–16 (GMSGGVDS) and Met35. Positions 95 to 97 (NPD) are interaction with target base in tRNA. Cys100 (nucleophile) is an active-site residue. An intrachain disulfide couples Cys100 to Cys196. Residue Gly124 coordinates ATP. The segment at 146-148 (KDQ) is interaction with tRNA. The active-site Cysteine persulfide intermediate is the Cys196. The tract at residues 308–309 (RY) is interaction with tRNA.

This sequence belongs to the MnmA/TRMU family.

The protein localises to the cytoplasm. It carries out the reaction S-sulfanyl-L-cysteinyl-[protein] + uridine(34) in tRNA + AH2 + ATP = 2-thiouridine(34) in tRNA + L-cysteinyl-[protein] + A + AMP + diphosphate + H(+). Its function is as follows. Catalyzes the 2-thiolation of uridine at the wobble position (U34) of tRNA, leading to the formation of s(2)U34. The chain is tRNA-specific 2-thiouridylase MnmA from Burkholderia pseudomallei (strain 668).